The chain runs to 57 residues: UPF0391 membrane protein RPB_2510 (57 aa).

Transmembrane regions (helical) follow at residues 6-26 and 35-55; these read WALI…TGIS and ILFY…FTIF.

Belongs to the UPF0391 family.

The protein localises to the cell membrane. This Rhodopseudomonas palustris (strain HaA2) protein is UPF0391 membrane protein RPB_2510.